Here is a 425-residue protein sequence, read N- to C-terminus: Queuine tRNA-ribosyltransferase accessory subunit 2 (425 aa).

The tract at residues 302–323 (QNGAQDLEKNSPEEDQEEEVVK) is disordered. Positions 351, 353, 356, and 382 each coordinate Zn(2+).

It belongs to the queuine tRNA-ribosyltransferase family. QTRT2 subfamily. In terms of assembly, heterodimer of a catalytic subunit QTRT1 and an accessory subunit QTRT2. The cofactor is Zn(2+).

Its subcellular location is the cytoplasm. It localises to the mitochondrion outer membrane. In terms of biological role, non-catalytic subunit of the queuine tRNA-ribosyltransferase (TGT) that catalyzes the base-exchange of a guanine (G) residue with queuine (Q) at position 34 (anticodon wobble position) in tRNAs with GU(N) anticodons (tRNA-Asp, -Asn, -His and -Tyr), resulting in the hypermodified nucleoside queuosine (7-(((4,5-cis-dihydroxy-2-cyclopenten-1-yl)amino)methyl)-7-deazaguanosine). This chain is Queuine tRNA-ribosyltransferase accessory subunit 2, found in Gallus gallus (Chicken).